The primary structure comprises 345 residues: Phosphate acyltransferase (345 aa).

The protein belongs to the PlsX family. Homodimer. Probably interacts with PlsY.

It localises to the cytoplasm. It carries out the reaction a fatty acyl-[ACP] + phosphate = an acyl phosphate + holo-[ACP]. It functions in the pathway lipid metabolism; phospholipid metabolism. Catalyzes the reversible formation of acyl-phosphate (acyl-PO(4)) from acyl-[acyl-carrier-protein] (acyl-ACP). This enzyme utilizes acyl-ACP as fatty acyl donor, but not acyl-CoA. The protein is Phosphate acyltransferase of Nitratidesulfovibrio vulgaris (strain ATCC 29579 / DSM 644 / CCUG 34227 / NCIMB 8303 / VKM B-1760 / Hildenborough) (Desulfovibrio vulgaris).